The following is a 142-amino-acid chain: MMSFVSLLLVGILFHATQAEQLTKCEVFRELKDLKGYGGVSLPEWVCTTFHTSGYDTQAIVQNNDSTEYGLFQINNKIWCKDDQNPHSSDICNISCDKFLDDDLTDDIMCVKKILDKVGINYWLAHKALCSEKLDQWLCEKL.

Residues Met-1–Ala-19 form the signal peptide. The region spanning Glu-20–Leu-142 is the C-type lysozyme domain. Disulfide bonds link Cys-25-Cys-139, Cys-47-Cys-130, Cys-80-Cys-96, and Cys-92-Cys-110. 2 N-linked (GlcNAc...) asparagine glycosylation sites follow: Asn-64 and Asn-93. Ca(2+) is bound by residues Lys-98, Asp-101, Asp-103, Asp-106, and Asp-107.

Belongs to the glycosyl hydrolase 22 family. Lactose synthase (LS) is a heterodimer of a catalytic component, beta1,4-galactosyltransferase (beta4Gal-T1) and a regulatory component, alpha-lactalbumin (LA). As to expression, mammary gland specific. Secreted in milk.

It is found in the secreted. In terms of biological role, regulatory subunit of lactose synthase, changes the substrate specificity of galactosyltransferase in the mammary gland making glucose a good acceptor substrate for this enzyme. This enables LS to synthesize lactose, the major carbohydrate component of milk. In other tissues, galactosyltransferase transfers galactose onto the N-acetylglucosamine of the oligosaccharide chains in glycoproteins. This is Alpha-lactalbumin (LALBA) from Bos mutus grunniens (Wild yak).